Consider the following 466-residue polypeptide: Adenosylhomocysteinase (466 aa).

Positions 57, 132, and 192 each coordinate substrate. An NAD(+)-binding site is contributed by Thr-193–Thr-195. 2 residues coordinate substrate: Lys-222 and Asp-226. Residues Asn-227, Gly-256–Gly-261, Glu-279, Asn-314, Ile-335–His-337, and Asn-380 each bind NAD(+).

Belongs to the adenosylhomocysteinase family. The cofactor is NAD(+).

Its subcellular location is the cytoplasm. The enzyme catalyses S-adenosyl-L-homocysteine + H2O = L-homocysteine + adenosine. The protein operates within amino-acid biosynthesis; L-homocysteine biosynthesis; L-homocysteine from S-adenosyl-L-homocysteine: step 1/1. In terms of biological role, may play a key role in the regulation of the intracellular concentration of adenosylhomocysteine. This chain is Adenosylhomocysteinase, found in Brucella abortus (strain S19).